A 561-amino-acid chain; its full sequence is Cytochrome P450 monooxygenase avaL (561 aa).

A helical transmembrane segment spans residues 19-39 (IAASCALVCIVSACYVVWSLL). C508 lines the heme pocket.

Belongs to the cytochrome P450 family. Heme is required as a cofactor.

It is found in the membrane. It participates in secondary metabolite biosynthesis. Functionally, cytochrome P450 monooxygenase; part of the cluster that mediates the biosynthesis of a highly modified cyclo-arginine-tryptophan dipeptide (cRW). The first step of the pathway is perfornmed by the arginine-containing cyclodipeptide synthase (RCPDS) avaA that acts as the scaffold-generating enzyme and is responsible for formation of the cyclo-Arg-Trp (cRW) diketopiperazine. AvaB then acts as a multifunctional flavoenzyme that is responsible for generating the cyclo-Arg-formylkynurenine DKP, which can be deformylated by avaC. AvaB then further catalyzes an additional N-oxidation followed by cyclization and dehydration. The next step is an N-acetylation of the guanidine group catalyzed by the arginine N-acetyltransferase avaD. The roles of the additional enzymes identified within the ava cluster still have to be determined. The chain is Cytochrome P450 monooxygenase avaL from Aspergillus versicolor.